Reading from the N-terminus, the 286-residue chain is Beta-lactamase SHV-46 (286 aa).

Residues 1 to 21 (MRYIRLCIISLLATLPLAVHA) form the signal peptide. Residue serine 66 is the Acyl-ester intermediate of the active site. Cysteine 73 and cysteine 119 form a disulfide bridge. The active-site Proton acceptor is the glutamate 164. 230-232 (KTG) lines the substrate pocket.

It belongs to the class-A beta-lactamase family.

It carries out the reaction a beta-lactam + H2O = a substituted beta-amino acid. The polypeptide is Beta-lactamase SHV-46 (bla) (Klebsiella oxytoca).